The following is a 180-amino-acid chain: Large ribosomal subunit protein uL5 (180 aa).

The protein belongs to the universal ribosomal protein uL5 family. In terms of assembly, part of the 50S ribosomal subunit; part of the 5S rRNA/L5/L18/L25 subcomplex. Contacts the 5S rRNA and the P site tRNA. Forms a bridge to the 30S subunit in the 70S ribosome.

This is one of the proteins that bind and probably mediate the attachment of the 5S RNA into the large ribosomal subunit, where it forms part of the central protuberance. In the 70S ribosome it contacts protein S13 of the 30S subunit (bridge B1b), connecting the 2 subunits; this bridge is implicated in subunit movement. Contacts the P site tRNA; the 5S rRNA and some of its associated proteins might help stabilize positioning of ribosome-bound tRNAs. This Lactiplantibacillus plantarum (strain ATCC BAA-793 / NCIMB 8826 / WCFS1) (Lactobacillus plantarum) protein is Large ribosomal subunit protein uL5.